Here is a 98-residue protein sequence, read N- to C-terminus: NADH-ubiquinone oxidoreductase chain 4L (98 aa).

3 consecutive transmembrane segments (helical) span residues 2–22, 29–49, and 61–81; these read PSIFTNIILAFATALLGTLVF, SLLCLEGMMLSMFVLSTLIIL, and ILLLVFAACEAAVGLALLVMV.

It belongs to the complex I subunit 4L family. As to quaternary structure, core subunit of respiratory chain NADH dehydrogenase (Complex I) which is composed of 45 different subunits.

The protein resides in the mitochondrion inner membrane. The catalysed reaction is a ubiquinone + NADH + 5 H(+)(in) = a ubiquinol + NAD(+) + 4 H(+)(out). Functionally, core subunit of the mitochondrial membrane respiratory chain NADH dehydrogenase (Complex I) which catalyzes electron transfer from NADH through the respiratory chain, using ubiquinone as an electron acceptor. Part of the enzyme membrane arm which is embedded in the lipid bilayer and involved in proton translocation. In Propithecus diadema diadema (Diademed sifaka), this protein is NADH-ubiquinone oxidoreductase chain 4L (MT-ND4L).